The chain runs to 540 residues: MFSPLGQFKHIVCPFLRTGRKCQSRNCFFSHDFQNSTKISPPYSENVEGYPKVKIEKSLPYKYDNCKLSICVPIVTTCIPYHSVENLNFNIRQNISTTLNLEKTNDSIKETKNENFRMDVLETYKCKQLNHQTTHLPTNTVLKKRSLFNDAISIVPNKKKQLVSAISTNSDSQGASSNIIPTPKYDSNSPAGHELRKRMTHLLYESYKDLGYSNAESSMLALLDEKNICETANSKMIYSSSCKSKILSLKKAPKKNEIQGSTPDEKLESLVHSEEELILWGYNIGDVAPVNPPDELRECDRCGTRFADPRGPCTYHWGKLFREKQGGEKIRTYTCCGVKEGDSSGCIIEDNHVFKYRHLPYLASVHPFSYLPDSTNSKQLSHCALDCELCYTTNGMELARLTVVAKESIIMDVFIKPKGKILSLNTRFSGIHDAKELESGITMDQMYIKIKELGMNKNTILIGHGLENDLNAMRLIHKRVIDTALLFTHARGPPFRYSLKYLTKKYLGTTIQTSTHDSEEDAVSALQLVFYKTKSNESQN.

The C3H1-type zinc finger occupies 7-34; that stretch reads QFKHIVCPFLRTGRKCQSRNCFFSHDFQ. Positions 382-529 constitute an Exonuclease domain; sequence HCALDCELCY…EDAVSALQLV (148 aa).

It belongs to the REXO1/REXO3 family.

The protein resides in the cytoplasm. It is found in the nucleus. In terms of biological role, 3' to 5' exoribonuclease required for proper 3' end maturation of MRP RNA and of the U5L snRNA. This chain is RNA exonuclease 3 (rex3), found in Schizosaccharomyces pombe (strain 972 / ATCC 24843) (Fission yeast).